Consider the following 477-residue polypeptide: Histidine permease HisP (477 aa).

Transmembrane regions (helical) follow at residues 16–36, 40–60, 86–106, 126–146, 156–176, 192–212, 238–258, 284–304, 337–359, 364–386, 408–428, and 437–457; these read ITMI…SGAT, AGPW…YFVM, PAFG…TIAV, IFSG…VGAF, IKVI…FGVL, HGFV…GFSF, SIFW…AAII, IGFA…VISS, IPFY…GIFG, LFLI…VSHI, WFPF…INLD, and WGEG…YFGY.

Belongs to the amino acid-polyamine-organocation (APC) superfamily. Amino acid transporter (AAT) (TC 2.A.3.1) family.

Its subcellular location is the cell membrane. Its function is as follows. Involved in histidine uptake. Has low affinity for arginine and lysine. Plays no significant role in the excretion of accumulated histidine. The protein is Histidine permease HisP of Lactococcus lactis subsp. cremoris (strain MG1363).